We begin with the raw amino-acid sequence, 679 residues long: FAST kinase domain-containing protein 2, mitochondrial (679 aa).

Phosphoserine is present on residues Ser113 and Ser126. One can recognise an RAP domain in the interval 607–664 (VAVLCVPKSAYCLNSNHLRGLMAMKIRHLNVMGFHVILIHNWELKKLKMEDAVTFVRK).

This sequence belongs to the FAST kinase family. In terms of assembly, monomer. Found in a complex with GRSF1, DDX28, DHX30 and FASTKD5. Associates with the 16S mitochondrial rRNA (16S mt-rRNA). Forms a regulatory protein-RNA complex, consisting of RCC1L, NGRN, RPUSD3, RPUSD4, TRUB2, FASTKD2 and 16S mt-rRNA.

It localises to the mitochondrion matrix. It is found in the mitochondrion nucleoid. In terms of biological role, plays an important role in assembly of the mitochondrial large ribosomal subunit. As a component of a functional protein-RNA module, consisting of RCC1L, NGRN, RPUSD3, RPUSD4, TRUB2, FASTKD2 and 16S mitochondrial ribosomal RNA (16S mt-rRNA), controls 16S mt-rRNA abundance and is required for intra-mitochondrial translation. May play a role in mitochondrial apoptosis. This chain is FAST kinase domain-containing protein 2, mitochondrial (Fastkd2), found in Rattus norvegicus (Rat).